The primary structure comprises 1484 residues: MYSEWRSLHLVIQSDQGHTSVLHSYPESVGREVANAVVRPLGQALGTSSVAGSESLLKTDKEVKWTMEVICYGLTLPLDGETVKYCVDVYTDWIMALVLPKDSIPLPIIKEPNLYVQSILKHLQNLFVPRQEQGSSQIRLCLQVLRAIQKLARESSIMARETWEVLLLFLLQINDILLAPPTVQGGIAENLAEKLIGVLFEVWLLACTRCFPTPPYWKTAKEMVANWRHHPAVVEQWSKVICALTSRLLRFTYGPSFPPFKVPDEDANLIPPEMDNECIAQTWFRFLHMLSNPVDLSNPAVISSTPKFQEQFLNVSGMPQELSQYPCLKHLPQIFFRAMRGISCLVDAFLGISRPRSDSAPPTPVNRLSMPQSAAVNTTPPHNRRHRAVTVNKATMKTSTVTTAHTSKVQHQASSTSPLSSPNQTSSEPRPLPAPRRPKVNSILNLFGSWLFDAAFVHCKLHNGINRDNSMTASFIQILLSYKSSIATQASMEFRRKGSQMSTDTMVSNPVFDASEFPDNYEAGRAEACGTLCRIFCSKKTGEEILPAYLSSVILNSPPLFCCDLKGIDVVVPYFISALETILPDRELSKFKSYVNPTELRRSSINILLSLLPLPHHFGTVRSEVVLEGKFSNDDSSSYDKPITFLSLKLRLVNILIGALQTETDPNNTQMILGAMLNIVQDSALLEAIGCQMEMGGGENNLKSHSRTNSGISSASGGSTEPTTPDSERPAQALLRDYGSTDSAAGLLIRSIHLVTQRLNSQWRQDMSISLAALELLSGLAKVKVMVDSGDRKRAISSVCSYIVYQCSRPAPLHSRDLHSMIVAAFQCLCVWLTEHPDMLDEKDCLKEVLEIVELGISGSKSKNSEQEVKYKGDKEPNPASMRVKDAAEATLTCIMQLLGAFPSPSGPASPCSLVNETTLIKYSRLPTINKHSFRYFVLDNSVILAMLEQPLGNEQNDFFPSVTVLVRGMSGRLAWAQQLCLLPRGAKANQKLFVPEPRPVPKNDVGFKYSVKHRPFPEEVDKIPFVKADLSIPDLHEIVTEELEERHEKLRSGMAQQIAYEMHLEQQSEGELQKRSFPDPVTDCKPPPPAQEFQTARLFLSHFGFLSLEALKEPANSRLPPHLIALDSTIPGFFDDIGYLDLLPCRPFDTVFIFYMKPGQKTNQEILKNVESSRNVQPHFLEFLLSLGWSVDVGKHPGWTGHVSTSWSINSCDDGEGSEPDEITSSEDVGASIFNGQKKVLYYADALTEIAFVVPSPVESLTDSLESNISDQDSDSNMDLMPGILKQPPLTLELVPNHTDSLNSSQRLSPSSRMKKLPQGRPVPPLGPETRVSVVWVERYDDIENFPLSDLMTEISTGVETTANSSTSLRSTTLEKEVPVIFIHPLNTGLFRIKIQGATGKFNMVIPLVDGMIVSRRALGFLVRQTVINICRRKRLESDSYSPPHVRRKQKITDIVNKYRNKQLEPEFYTALFQEVGLKNCSS.

2 disordered regions span residues proline 355–arginine 437 and glutamate 699–glutamate 728. A Phosphoserine modification is found at serine 359. 2 positions are modified to phosphothreonine: threonine 363 and threonine 379. 3 stretches are compositionally biased toward polar residues: residues serine 369–proline 381, asparagine 392–glutamate 428, and asparagine 701–proline 725. 2 positions are modified to phosphoserine: serine 421 and serine 710. A Phosphothreonine modification is found at threonine 724. The Rap-GAP domain occupies isoleucine 1138–isoleucine 1382. Serine 1275 carries the post-translational modification Phosphoserine. The disordered stretch occupies residues proline 1297–proline 1325. Over residues serine 1302–serine 1313 the composition is skewed to low complexity.

Component of the heterodimeric RalGAP1 complex with RALGAPA1 and of the heterodimeric RalGAP2 complex with RALGAPA2. Heterodimerization is required for activity. Abundantly expressed in testis, pancreas, lung, thymus, brown fat, and white fat. Expressed at lower levels in the brain.

Functionally, non-catalytic subunit of the heterodimeric RalGAP1 and RalGAP2 complexes which act as GTPase activators for the Ras-like small GTPases RALA and RALB. This Mus musculus (Mouse) protein is Ral GTPase-activating protein subunit beta (Ralgapb).